We begin with the raw amino-acid sequence, 568 residues long: Proline--tRNA ligase (568 aa).

It belongs to the class-II aminoacyl-tRNA synthetase family. ProS type 1 subfamily. In terms of assembly, homodimer.

The protein localises to the cytoplasm. It carries out the reaction tRNA(Pro) + L-proline + ATP = L-prolyl-tRNA(Pro) + AMP + diphosphate. Catalyzes the attachment of proline to tRNA(Pro) in a two-step reaction: proline is first activated by ATP to form Pro-AMP and then transferred to the acceptor end of tRNA(Pro). As ProRS can inadvertently accommodate and process non-cognate amino acids such as alanine and cysteine, to avoid such errors it has two additional distinct editing activities against alanine. One activity is designated as 'pretransfer' editing and involves the tRNA(Pro)-independent hydrolysis of activated Ala-AMP. The other activity is designated 'posttransfer' editing and involves deacylation of mischarged Ala-tRNA(Pro). The misacylated Cys-tRNA(Pro) is not edited by ProRS. The polypeptide is Proline--tRNA ligase (Halorhodospira halophila (strain DSM 244 / SL1) (Ectothiorhodospira halophila (strain DSM 244 / SL1))).